The sequence spans 75 residues: Small ribosomal subunit protein bS18 (75 aa).

Belongs to the bacterial ribosomal protein bS18 family. In terms of assembly, part of the 30S ribosomal subunit. Forms a tight heterodimer with protein bS6.

Its function is as follows. Binds as a heterodimer with protein bS6 to the central domain of the 16S rRNA, where it helps stabilize the platform of the 30S subunit. The chain is Small ribosomal subunit protein bS18 from Laribacter hongkongensis (strain HLHK9).